The following is a 93-amino-acid chain: Photosystem I iron-sulfur center (93 aa).

4Fe-4S ferredoxin-type domains follow at residues 13–43 (KDHE…MVPS) and 50–80 (QVVT…IRVY). Positions 23, 26, 29, 33, 60, 63, 66, and 70 each coordinate [4Fe-4S] cluster.

In terms of assembly, the eukaryotic PSI reaction center is composed of at least 11 subunits. [4Fe-4S] cluster is required as a cofactor.

It is found in the plastid. The protein localises to the chloroplast thylakoid membrane. It carries out the reaction reduced [plastocyanin] + hnu + oxidized [2Fe-2S]-[ferredoxin] = oxidized [plastocyanin] + reduced [2Fe-2S]-[ferredoxin]. Its function is as follows. Apoprotein for the two 4Fe-4S centers FA and FB of photosystem I (PSI); essential for photochemical activity. FB is the terminal electron acceptor of PSI, donating electrons to ferredoxin. The C-terminus interacts with PsaA/B/D and helps assemble the protein into the PSI complex. Required for binding of PsaD and PsaE to PSI. PSI is a plastocyanin-ferredoxin oxidoreductase, converting photonic excitation into a charge separation, which transfers an electron from the donor P700 chlorophyll pair to the spectroscopically characterized acceptors A0, A1, FX, FA and FB in turn. This Bigelowiella natans (Pedinomonas minutissima) protein is Photosystem I iron-sulfur center.